We begin with the raw amino-acid sequence, 338 residues long: L-serine dehydratase (338 aa).

The residue at position 39 (Lys-39) is an N6-(pyridoxal phosphate)lysine.

It belongs to the serine/threonine dehydratase family. It depends on pyridoxal 5'-phosphate as a cofactor.

It localises to the cytoplasm. It carries out the reaction L-serine = pyruvate + NH4(+). It functions in the pathway carbohydrate biosynthesis; gluconeogenesis. This chain is L-serine dehydratase (SDL1), found in Saccharomyces cerevisiae (strain RM11-1a) (Baker's yeast).